The chain runs to 542 residues: Phosphoenolpyruvate carboxykinase (ATP) (542 aa).

Positions 67, 208, and 214 each coordinate substrate. Residues Lys214, His233, and 249 to 257 each bind ATP; that span reads GLSGTGKTT. Positions 214 and 233 each coordinate Mn(2+). Residue Asp270 participates in Mn(2+) binding. ATP-binding positions include Glu298, Arg334, 450-451, and Thr456; that span reads RI. Arg334 provides a ligand contact to substrate.

The protein belongs to the phosphoenolpyruvate carboxykinase (ATP) family. Monomer. Requires Mn(2+) as cofactor.

The protein localises to the cytoplasm. It catalyses the reaction oxaloacetate + ATP = phosphoenolpyruvate + ADP + CO2. The protein operates within carbohydrate biosynthesis; gluconeogenesis. Functionally, involved in the gluconeogenesis. Catalyzes the conversion of oxaloacetate (OAA) to phosphoenolpyruvate (PEP) through direct phosphoryl transfer between the nucleoside triphosphate and OAA. The protein is Phosphoenolpyruvate carboxykinase (ATP) of Vibrio vulnificus (strain CMCP6).